The sequence spans 337 residues: Eukaryotic translation initiation factor 3 subunit H (337 aa).

In terms of domain architecture, MPN spans 21–153; sequence VQCDGLAVMK…LKAYRLTPQA (133 aa).

It belongs to the eIF-3 subunit H family. In terms of assembly, component of the eukaryotic translation initiation factor 3 (eIF-3) complex.

Its subcellular location is the cytoplasm. Functionally, component of the eukaryotic translation initiation factor 3 (eIF-3) complex, which is involved in protein synthesis of a specialized repertoire of mRNAs and, together with other initiation factors, stimulates binding of mRNA and methionyl-tRNAi to the 40S ribosome. The eIF-3 complex specifically targets and initiates translation of a subset of mRNAs involved in cell proliferation. The sequence is that of Eukaryotic translation initiation factor 3 subunit H from Bombyx mori (Silk moth).